The primary structure comprises 285 residues: Hydrolase in pqqF 5'region (285 aa).

The region spanning 22–258 (MRVALYQCPP…EALIIGTLDR (237 aa)) is the CN hydrolase domain. The active-site Proton acceptor is glutamate 60. The active-site Proton donor is lysine 131. Catalysis depends on cysteine 165, which acts as the Nucleophile.

The protein belongs to the carbon-nitrogen hydrolase superfamily. NIT1/NIT2 family.

The protein is Hydrolase in pqqF 5'region of Pseudomonas protegens (strain DSM 19095 / LMG 27888 / CFBP 6595 / CHA0).